The sequence spans 513 residues: uncharacterized protein (513 aa).

A TRAM domain is found at 3–61 (NLKIGQKLQLEIERMGINGEGIGVISGRLVFIPYALPGEEVLVEITENARNFSRAKLVK). S-adenosyl-L-methionine is bound by residues Gln309, Tyr338, Asp359, and Asp407. Cys434 (nucleophile) is an active-site residue.

The protein belongs to the class I-like SAM-binding methyltransferase superfamily. RNA M5U methyltransferase family.

This is an uncharacterized protein from Lactococcus lactis subsp. lactis (strain IL1403) (Streptococcus lactis).